The following is a 350-amino-acid chain: DNA polymerase IV (350 aa).

One can recognise a UmuC domain in the interval 6 to 187 (IIHIDMDAFY…LPVEKIFGIG (182 aa)). Asp10 and Asp105 together coordinate Mg(2+). Residue Glu106 is part of the active site.

The protein belongs to the DNA polymerase type-Y family. As to quaternary structure, monomer. It depends on Mg(2+) as a cofactor.

The protein localises to the cytoplasm. It carries out the reaction DNA(n) + a 2'-deoxyribonucleoside 5'-triphosphate = DNA(n+1) + diphosphate. In terms of biological role, poorly processive, error-prone DNA polymerase involved in untargeted mutagenesis. Copies undamaged DNA at stalled replication forks, which arise in vivo from mismatched or misaligned primer ends. These misaligned primers can be extended by PolIV. Exhibits no 3'-5' exonuclease (proofreading) activity. May be involved in translesional synthesis, in conjunction with the beta clamp from PolIII. The polypeptide is DNA polymerase IV (Protochlamydia amoebophila (strain UWE25)).